The primary structure comprises 61 residues: Photosystem II reaction center protein K (61 aa).

Positions 1–24 (MLNIFSLISICLNSALYSSSFFFG) are excised as a propeptide. The chain crosses the membrane as a helical span at residues 40–60 (MPVIPVFFFLLAFVWQAAVSF).

Belongs to the PsbK family. In terms of assembly, PSII is composed of 1 copy each of membrane proteins PsbA, PsbB, PsbC, PsbD, PsbE, PsbF, PsbH, PsbI, PsbJ, PsbK, PsbL, PsbM, PsbT, PsbX, PsbY, PsbZ, Psb30/Ycf12, at least 3 peripheral proteins of the oxygen-evolving complex and a large number of cofactors. It forms dimeric complexes.

The protein localises to the plastid. It is found in the chloroplast thylakoid membrane. Functionally, one of the components of the core complex of photosystem II (PSII). PSII is a light-driven water:plastoquinone oxidoreductase that uses light energy to abstract electrons from H(2)O, generating O(2) and a proton gradient subsequently used for ATP formation. It consists of a core antenna complex that captures photons, and an electron transfer chain that converts photonic excitation into a charge separation. The chain is Photosystem II reaction center protein K from Jasminum nudiflorum (Winter jasmine).